The following is a 351-amino-acid chain: N(4)-bis(aminopropyl)spermidine synthase (351 aa).

This sequence belongs to the branched-chain polyamine synthase family.

The protein resides in the cytoplasm. It carries out the reaction 2 S-adenosyl 3-(methylsulfanyl)propylamine + spermidine = N(4)-bis(aminopropyl)spermidine + 2 S-methyl-5'-thioadenosine + 2 H(+). The protein operates within amine and polyamine biosynthesis. Functionally, involved in the biosynthesis of branched-chain polyamines, which support the growth of thermophiles under high-temperature conditions. Catalyzes the sequential condensation of spermidine with the aminopropyl groups of decarboxylated S-adenosylmethionines to produce N(4)-bis(aminopropyl)spermidine via N(4)-aminopropylspermidine. Can also use spermine to produce N(4)-aminopropylspermine. The sequence is that of N(4)-bis(aminopropyl)spermidine synthase from Thermococcus kodakarensis (strain ATCC BAA-918 / JCM 12380 / KOD1) (Pyrococcus kodakaraensis (strain KOD1)).